We begin with the raw amino-acid sequence, 235 residues long: Replication protein (235 aa).

Tyr149 lines the DNA pocket.

The protein belongs to the Gram-positive plasmids replication protein type 1 family.

Functionally, produces a single-strand nick in a specific site of the plasmid, and this nick results in single-strand replication by rolling circle mechanism. This chain is Replication protein (repB), found in Bacillus sp.